The sequence spans 258 residues: 4-hydroxy-tetrahydrodipicolinate reductase (258 aa).

Residues 8 to 13, 86 to 88, and 110 to 113 each bind NAD(+); these read GGSGKM, GTT, and ATNM. The active-site Proton donor/acceptor is His142. A (S)-2,3,4,5-tetrahydrodipicolinate-binding site is contributed by His143. Catalysis depends on Lys146, which acts as the Proton donor. (S)-2,3,4,5-tetrahydrodipicolinate is bound at residue 152-153; sequence GT.

It belongs to the DapB family.

The protein resides in the cytoplasm. The enzyme catalyses (S)-2,3,4,5-tetrahydrodipicolinate + NAD(+) + H2O = (2S,4S)-4-hydroxy-2,3,4,5-tetrahydrodipicolinate + NADH + H(+). It carries out the reaction (S)-2,3,4,5-tetrahydrodipicolinate + NADP(+) + H2O = (2S,4S)-4-hydroxy-2,3,4,5-tetrahydrodipicolinate + NADPH + H(+). The protein operates within amino-acid biosynthesis; L-lysine biosynthesis via DAP pathway; (S)-tetrahydrodipicolinate from L-aspartate: step 4/4. Catalyzes the conversion of 4-hydroxy-tetrahydrodipicolinate (HTPA) to tetrahydrodipicolinate. The polypeptide is 4-hydroxy-tetrahydrodipicolinate reductase (Campylobacter hominis (strain ATCC BAA-381 / DSM 21671 / CCUG 45161 / LMG 19568 / NCTC 13146 / CH001A)).